The chain runs to 206 residues: Endoplasmic reticulum transmembrane protein YET-like (206 aa).

Topologically, residues Met-1 to Glu-2 are lumenal. A helical transmembrane segment spans residues Phe-3–Met-23. Topologically, residues Leu-24–Asn-46 are cytoplasmic. A helical transmembrane segment spans residues Ala-47–Val-67. The Lumenal portion of the chain corresponds to Asn-68–Asn-101. A helical membrane pass occupies residues Ser-102 to Ile-122. At Ser-123 to Asp-206 the chain is on the cytoplasmic side. Residues Lys-140–Lys-198 are a coiled coil. A Di-lysine motif motif is present at residues Lys-203 to Asp-206.

The protein belongs to the BCAP29/BCAP31 family.

The protein localises to the endoplasmic reticulum membrane. Its function is as follows. May play a role in anterograde transport of membrane proteins from the endoplasmic reticulum to the Golgi. The sequence is that of Endoplasmic reticulum transmembrane protein YET-like from Dictyostelium discoideum (Social amoeba).